Consider the following 476-residue polypeptide: Protein transport protein Sec61 subunit alpha-like 2 (476 aa).

Residues 2–33 (AIKFLEVIKPFCAVLPEIQKPERRIQFKEKVL) lie on the Cytoplasmic side of the membrane. The chain crosses the membrane as a helical span at residues 34–53 (WTAITLFIFLVCCQIPLFGI). The Lumenal portion of the chain corresponds to 54-76 (MSSDSADPFYWMRVIMASNRGTL). A helical transmembrane segment spans residues 77–96 (MELGISPIVTSGLIMQLLAG). The Cytoplasmic portion of the chain corresponds to 97–117 (AKIIEVGDTPKDRALFNGAQK). A helical transmembrane segment spans residues 118–138 (LFGMIITIGQAVVYVMTGMYG). Residues 139–144 (DPSEMG) lie on the Lumenal side of the membrane. Residues 145–165 (AGICLLIIIQLFVAGLIVLLL) form a helical membrane-spanning segment. The Cytoplasmic portion of the chain corresponds to 166–172 (DELLQKG). A helical transmembrane segment spans residues 173 to 193 (YGLGSGISLFIATNICETIVW). Topologically, residues 194–240 (KAFSPTTVNTGRGTEFEGAIIALFHLLATRTDKVRALREAFYRQNLP) are lumenal. Residues 241–261 (NLMNLIATIFVFAVVIYFQGF) form a helical membrane-spanning segment. At 262–288 (RVDLPIKSARYRGQYNTYPIKLFYTSN) the chain is on the cytoplasmic side. Residues 289 to 309 (IPIILQSALVSNLYVISQMLS) traverse the membrane as a helical segment. Topologically, residues 310–354 (TRFSGNFLVNLLGTWSDTSTGGPARAYPVGGLCYYLSPPESFGTV) are lumenal. Residues 355–375 (LEDPIHAIIYIIFMLGSCAFF) traverse the membrane as a helical segment. At 376 to 420 (SKTWIEVSGSSAKDVAKQLKEQQMVMRGHRETSMVHELNRYIPTA) the chain is on the cytoplasmic side. The helical transmembrane segment at 421–441 (AAFGGLCIGGLSVMADFLGAI) threads the bilayer. At 442–445 (GSGT) the chain is on the lumenal side. The chain crosses the membrane as a helical span at residues 446–462 (GILLAVTIIYQYFEIFV). Over 463–476 (KEQSEVGSVGALLF) the chain is Cytoplasmic.

Belongs to the SecY/SEC61-alpha family. The SEC61 channel-forming translocon complex consists of channel-forming core components SEC61A1, SEC61B and SEC61G and different auxiliary components such as SEC62 and SEC63.

It is found in the endoplasmic reticulum membrane. Its function is as follows. Component of SEC61 channel-forming translocon complex that mediates transport of signal peptide-containing precursor polypeptides across the endoplasmic reticulum (ER). Forms a ribosome receptor and a gated pore in the ER membrane, both functions required for cotranslational translocation of nascent polypeptides. This is Protein transport protein Sec61 subunit alpha-like 2 (sec61al2) from Danio rerio (Zebrafish).